We begin with the raw amino-acid sequence, 366 residues long: Phospho-N-acetylmuramoyl-pentapeptide-transferase (366 aa).

10 consecutive transmembrane segments (helical) span residues 3 to 23 (QIFI…PVLI), 54 to 74 (GIAV…VGLV), 80 to 100 (PGVS…LGFA), 120 to 140 (LVGQ…FPNA), 161 to 181 (IAIG…YLVI), 197 to 217 (LASG…FWQF), 238 to 258 (LSML…WNAA), 262 to 282 (IFMG…LSVT), 288 to 308 (LMIL…IQVV), and 341 to 361 (FWLL…AEWL).

Belongs to the glycosyltransferase 4 family. MraY subfamily. Mg(2+) is required as a cofactor.

Its subcellular location is the cell membrane. The enzyme catalyses UDP-N-acetyl-alpha-D-muramoyl-L-alanyl-gamma-D-glutamyl-meso-2,6-diaminopimeloyl-D-alanyl-D-alanine + di-trans,octa-cis-undecaprenyl phosphate = di-trans,octa-cis-undecaprenyl diphospho-N-acetyl-alpha-D-muramoyl-L-alanyl-D-glutamyl-meso-2,6-diaminopimeloyl-D-alanyl-D-alanine + UMP. Its pathway is cell wall biogenesis; peptidoglycan biosynthesis. Functionally, catalyzes the initial step of the lipid cycle reactions in the biosynthesis of the cell wall peptidoglycan: transfers peptidoglycan precursor phospho-MurNAc-pentapeptide from UDP-MurNAc-pentapeptide onto the lipid carrier undecaprenyl phosphate, yielding undecaprenyl-pyrophosphoryl-MurNAc-pentapeptide, known as lipid I. The protein is Phospho-N-acetylmuramoyl-pentapeptide-transferase of Corynebacterium jeikeium (strain K411).